The sequence spans 324 residues: Probable UDP-sugar transporter protein SLC35A4 (324 aa).

The Cytoplasmic segment spans residues 1–18 (MSVEDGGMPGLGRPRQAR). The helical transmembrane segment at 19–39 (WTLMLLLSTAMYGAHAPLLAL) threads the bilayer. Topologically, residues 40-52 (CHVDGRVPFRPSS) are lumenal. A helical transmembrane segment spans residues 53–73 (AVLLTELTKLLLCAFSLLVGW). Over 74-85 (QAWPQGPPPWRQ) the chain is Cytoplasmic. The helical transmembrane segment at 86–106 (AAPFALSALLYGANNNLVIYL) threads the bilayer. The Lumenal segment spans residues 107–142 (QRYMDPSTYQVLSNLKIGSTAVLYCLCLRHRLSVRQ). The helical transmembrane segment at 143–163 (GLALLLLMAAGACYAAGGLQV) threads the bilayer. The Cytoplasmic segment spans residues 164–180 (PGNTLPSPPPAAAASPM). Residues 181-201 (PLHITPLGLLLLILYCLISGL) traverse the membrane as a helical segment. The Lumenal portion of the chain corresponds to 202-214 (SSVYTELLMKRQR). A helical membrane pass occupies residues 215 to 235 (LPLALQNLFLYTFGVLLNLGL). Over 236–250 (HAGGGSGPGLLEGFS) the chain is Cytoplasmic. The helical transmembrane segment at 251 to 271 (GWAALVVLSQALNGLLMSAVM) threads the bilayer. The Lumenal portion of the chain corresponds to 272-275 (KHGS). The chain crosses the membrane as a helical span at residues 276 to 298 (SITRLFVVSCSLVVNAVLSAVLL). Residues 299–324 (RLQLTAAFFLATLLIGLAMRLYYGSR) lie on the Cytoplasmic side of the membrane.

Belongs to the nucleotide-sugar transporter family. SLC35A subfamily. Found in a complex with SLC35A2 and SLC35A3.

The protein localises to the golgi apparatus membrane. The enzyme catalyses CDP-L-ribitol(in) + CDP(out) = CDP-L-ribitol(out) + CDP(in). Its function is as follows. Mediates the transport of CDP-ribitol. Does not exhibit CMP-sialic acid, UDP-galactose and UDP-N-acetylglucosamine transport activity. The sequence is that of Probable UDP-sugar transporter protein SLC35A4 from Homo sapiens (Human).